The sequence spans 379 residues: Very late expression factor 1 (379 aa).

The Tyr recombinase domain occupies 169-348 (VIDTILNFIN…YNIGLDETSS (180 aa)). Residues Arg-210, Lys-239, Arg-303, and His-326 contribute to the active site. Catalysis depends on Tyr-335, which acts as the O-(3'-phospho-DNA)-tyrosine intermediate. A compositionally biased stretch (acidic residues) spans 346-358 (TSSEEENNNDDDD). The tract at residues 346–379 (TSSEEENNNDDDDAQHNRNSSGSSGESLLYYRNE) is disordered. Residues 362–379 (NRNSSGSSGESLLYYRNE) show a composition bias toward low complexity.

This sequence belongs to the 'phage' integrase family.

Functionally, plays a role in nucleocapsid assembly and serves an essential function during the final stages of the DNA packaging process. Participates in the processing of branched DNA molecules at the late stages of viral genome replication. This chain is Very late expression factor 1 (VLF-1), found in Lepidoptera (butterflies and moths).